We begin with the raw amino-acid sequence, 445 residues long: Phosphoglucosamine mutase (445 aa).

Catalysis depends on Ser102, which acts as the Phosphoserine intermediate. Mg(2+)-binding residues include Ser102, Asp240, Asp242, and Asp244. A Phosphoserine modification is found at Ser102.

The protein belongs to the phosphohexose mutase family. Mg(2+) serves as cofactor. In terms of processing, activated by phosphorylation.

The enzyme catalyses alpha-D-glucosamine 1-phosphate = D-glucosamine 6-phosphate. Catalyzes the conversion of glucosamine-6-phosphate to glucosamine-1-phosphate. In Mycobacterium ulcerans (strain Agy99), this protein is Phosphoglucosamine mutase.